The following is a 65-amino-acid chain: Alpha-conotoxine-like Am1.5 (65 aa).

Positions 1–21 (MGMRMMFTVFLLVVLATTVVS) are cleaved as a signal peptide. Residues 22-46 (FMSGRAFRDRNAAAKVSDLIALKAR) constitute a propeptide that is removed on maturation. Glu49 carries the post-translational modification 4-carboxyglutamate. The interval 52–54 (SHP) is ser-Xaa-Pro motif, crucial for potent interaction with nAChR. Pro54 and Pro61 each carry 4-hydroxyproline. Position 62 is a 4-carboxyglutamate (Glu62).

Belongs to the conotoxin A superfamily. In terms of processing, contains 2 disulfide bonds. In terms of tissue distribution, expressed by the venom duct.

It localises to the secreted. Its function is as follows. Alpha-conotoxins act on postsynaptic membranes, they bind to the nicotinic acetylcholine receptors (nAChR) and thus inhibit them. The protein is Alpha-conotoxine-like Am1.5 of Conus amadis (Amadis cone).